We begin with the raw amino-acid sequence, 416 residues long: Glutamyl-tRNA reductase (416 aa).

Residues 46–49 (TCNR), Ser-97, 102–104 (DHE), and Gln-108 contribute to the substrate site. Cys-47 functions as the Nucleophile in the catalytic mechanism. 178-183 (GAGMAA) is an NADP(+) binding site.

Belongs to the glutamyl-tRNA reductase family. In terms of assembly, homodimer.

It carries out the reaction (S)-4-amino-5-oxopentanoate + tRNA(Glu) + NADP(+) = L-glutamyl-tRNA(Glu) + NADPH + H(+). The protein operates within porphyrin-containing compound metabolism; protoporphyrin-IX biosynthesis; 5-aminolevulinate from L-glutamyl-tRNA(Glu): step 1/2. Catalyzes the NADPH-dependent reduction of glutamyl-tRNA(Glu) to glutamate 1-semialdehyde (GSA). The sequence is that of Glutamyl-tRNA reductase from Aeropyrum pernix (strain ATCC 700893 / DSM 11879 / JCM 9820 / NBRC 100138 / K1).